The primary structure comprises 115 residues: Large ribosomal subunit protein bL20 (115 aa).

It belongs to the bacterial ribosomal protein bL20 family.

Functionally, binds directly to 23S ribosomal RNA and is necessary for the in vitro assembly process of the 50S ribosomal subunit. It is not involved in the protein synthesizing functions of that subunit. This chain is Large ribosomal subunit protein bL20, found in Methylococcus capsulatus (strain ATCC 33009 / NCIMB 11132 / Bath).